The following is a 408-amino-acid chain: Na(+)/H(+) antiporter NhaA 2 (408 aa).

11 helical membrane-spanning segments follow: residues 36–56, 79–99, 115–135, 145–165, 174–194, 197–217, 225–245, 281–301, 310–330, 348–368, and 381–401; these read GILL…GLGV, ILLW…GLEI, ALPV…YFLF, GWGI…SLLG, IFLA…IAVF, SELH…LMVF, LFFY…SGIH, FIIM…SEML, LGII…MSWL, VLGL…IALL, and FAIL…LSSY.

The protein belongs to the NhaA Na(+)/H(+) (TC 2.A.33) antiporter family.

The protein resides in the cell inner membrane. It catalyses the reaction Na(+)(in) + 2 H(+)(out) = Na(+)(out) + 2 H(+)(in). Na(+)/H(+) antiporter that extrudes sodium in exchange for external protons. The protein is Na(+)/H(+) antiporter NhaA 2 of Flavobacterium johnsoniae (strain ATCC 17061 / DSM 2064 / JCM 8514 / BCRC 14874 / CCUG 350202 / NBRC 14942 / NCIMB 11054 / UW101) (Cytophaga johnsonae).